Reading from the N-terminus, the 514-residue chain is L-threonine dehydratase biosynthetic IlvA (514 aa).

Lys62 is subject to N6-(pyridoxal phosphate)lysine. Residues Asn89, Gly188–Leu192, and Ser315 contribute to the pyridoxal 5'-phosphate site. 2 consecutive ACT-like domains span residues Ala339–Asp411 and Arg434–Asn504.

Belongs to the serine/threonine dehydratase family. Homotetramer. The cofactor is pyridoxal 5'-phosphate.

It carries out the reaction L-threonine = 2-oxobutanoate + NH4(+). It participates in amino-acid biosynthesis; L-isoleucine biosynthesis; 2-oxobutanoate from L-threonine: step 1/1. Isoleucine allosterically inhibits whereas valine allosterically activates this enzyme. Catalyzes the anaerobic formation of alpha-ketobutyrate and ammonia from threonine in a two-step reaction. The first step involved a dehydration of threonine and a production of enamine intermediates (aminocrotonate), which tautomerizes to its imine form (iminobutyrate). Both intermediates are unstable and short-lived. The second step is the nonenzymatic hydrolysis of the enamine/imine intermediates to form 2-ketobutyrate and free ammonia. In the low water environment of the cell, the second step is accelerated by RidA. The chain is L-threonine dehydratase biosynthetic IlvA (ilvA) from Escherichia coli (strain K12).